We begin with the raw amino-acid sequence, 176 residues long: ATP-dependent protease subunit HslV (176 aa).

The active site involves threonine 2. The Na(+) site is built by glycine 157, cysteine 160, and threonine 163.

It belongs to the peptidase T1B family. HslV subfamily. In terms of assembly, a double ring-shaped homohexamer of HslV is capped on each side by a ring-shaped HslU homohexamer. The assembly of the HslU/HslV complex is dependent on binding of ATP.

The protein resides in the cytoplasm. The catalysed reaction is ATP-dependent cleavage of peptide bonds with broad specificity.. Its activity is regulated as follows. Allosterically activated by HslU binding. In terms of biological role, protease subunit of a proteasome-like degradation complex believed to be a general protein degrading machinery. The chain is ATP-dependent protease subunit HslV from Salmonella agona (strain SL483).